A 202-amino-acid chain; its full sequence is Translation initiation factor IF-3 (202 aa).

The interval threonine 178–asparagine 202 is disordered. Residues leucine 185–lysine 196 are compositionally biased toward basic and acidic residues.

Belongs to the IF-3 family. In terms of assembly, monomer.

The protein localises to the cytoplasm. Functionally, IF-3 binds to the 30S ribosomal subunit and shifts the equilibrium between 70S ribosomes and their 50S and 30S subunits in favor of the free subunits, thus enhancing the availability of 30S subunits on which protein synthesis initiation begins. The chain is Translation initiation factor IF-3 from Prochlorococcus marinus (strain NATL1A).